The primary structure comprises 214 residues: Chalcone isomerase-like protein 1 (214 aa).

The protein belongs to the chalcone isomerase family. As to expression, mostly expressed in glandular trichomes (lupulin glands), and, to a lower extent, in cones, cones bracts, leaves, stems and roots.

Its subcellular location is the cytoplasm. It catalyses the reaction a chalcone = a flavanone.. It participates in secondary metabolite biosynthesis; flavonoid biosynthesis. Its function is as follows. Involved in the biosynthesis of prenylated phenolics natural products which contribute to the bitter taste of beer and display broad biological activities. Involved in anthocyanin biosynthesis. Polyketide binding proteins (PBP) which reduces the catalytic activities of CHS_H1 and PT1L and prevents demethylxanthohumol (DMX) production, by binding to DMX and naringenin chalcone (NC) to stabilize the chalconoids ring-opened structure. The polypeptide is Chalcone isomerase-like protein 1 (Humulus lupulus (European hop)).